A 45-amino-acid polypeptide reads, in one-letter code: Alpha-conotoxin-like Lp1.10 (45 aa).

The propeptide occupies 1-27; it reads VVLGPASDGRNAAANVKAPDLIALTVR. Disulfide bonds link Cys30/Cys36 and Cys31/Cys44. A lacks the Ser-Xaa-Pro motif that is crucial for potent interaction with nAChR region spans residues 32 to 34; the sequence is HNA. Cys44 is subject to Cysteine amide.

The protein belongs to the conotoxin A superfamily. In terms of tissue distribution, expressed by the venom duct.

The protein resides in the secreted. In terms of biological role, alpha-conotoxins act on postsynaptic membranes, they bind to the nicotinic acetylcholine receptors (nAChR) and thus inhibit them. Has possibly a distinct nAChR binding mode from other alpha-conotoxins, due to a different three residue motif (lacks the Ser-Xaa-Pro motif). This is Alpha-conotoxin-like Lp1.10 from Conus leopardus (Leopard cone).